We begin with the raw amino-acid sequence, 246 residues long: PF03932 family protein CutC (246 aa).

It belongs to the CutC family.

The protein localises to the cytoplasm. The chain is PF03932 family protein CutC from Treponema denticola (strain ATCC 35405 / DSM 14222 / CIP 103919 / JCM 8153 / KCTC 15104).